We begin with the raw amino-acid sequence, 274 residues long: 2,3,4,5-tetrahydropyridine-2,6-dicarboxylate N-succinyltransferase (274 aa).

Belongs to the transferase hexapeptide repeat family.

It is found in the cytoplasm. It carries out the reaction (S)-2,3,4,5-tetrahydrodipicolinate + succinyl-CoA + H2O = (S)-2-succinylamino-6-oxoheptanedioate + CoA. Its pathway is amino-acid biosynthesis; L-lysine biosynthesis via DAP pathway; LL-2,6-diaminopimelate from (S)-tetrahydrodipicolinate (succinylase route): step 1/3. In Escherichia coli (strain SMS-3-5 / SECEC), this protein is 2,3,4,5-tetrahydropyridine-2,6-dicarboxylate N-succinyltransferase.